A 406-amino-acid polypeptide reads, in one-letter code: S-adenosylmethionine synthase (406 aa).

Residue histidine 17 participates in ATP binding. Position 19 (aspartate 19) interacts with Mg(2+). Glutamate 45 provides a ligand contact to K(+). The L-methionine site is built by glutamate 58 and glutamine 101. A flexible loop region spans residues 101–111 (QSAEINQGVAR). Residues 178–180 (DGK), aspartate 258, 264–265 (RK), alanine 281, and lysine 285 each bind ATP. Residue aspartate 258 participates in L-methionine binding. Lysine 289 serves as a coordination point for L-methionine.

The protein belongs to the AdoMet synthase family. As to quaternary structure, homotetramer; dimer of dimers. Requires Mg(2+) as cofactor. K(+) serves as cofactor.

It is found in the cytoplasm. The enzyme catalyses L-methionine + ATP + H2O = S-adenosyl-L-methionine + phosphate + diphosphate. It functions in the pathway amino-acid biosynthesis; S-adenosyl-L-methionine biosynthesis; S-adenosyl-L-methionine from L-methionine: step 1/1. Functionally, catalyzes the formation of S-adenosylmethionine (AdoMet) from methionine and ATP. The overall synthetic reaction is composed of two sequential steps, AdoMet formation and the subsequent tripolyphosphate hydrolysis which occurs prior to release of AdoMet from the enzyme. This chain is S-adenosylmethionine synthase, found in Bifidobacterium longum (strain NCC 2705).